A 132-amino-acid chain; its full sequence is Small ribosomal subunit protein uS8 (132 aa).

It belongs to the universal ribosomal protein uS8 family. Part of the 30S ribosomal subunit. Contacts proteins S5 and S12.

Its function is as follows. One of the primary rRNA binding proteins, it binds directly to 16S rRNA central domain where it helps coordinate assembly of the platform of the 30S subunit. The chain is Small ribosomal subunit protein uS8 from Streptococcus pyogenes serotype M1.